The sequence spans 483 residues: Regulatory protein ViaA (483 aa).

Belongs to the ViaA family. As to quaternary structure, homodimer. Interacts with RavA.

It localises to the cytoplasm. Component of the RavA-ViaA chaperone complex, which may act on the membrane to optimize the function of some of the respiratory chains. ViaA stimulates the ATPase activity of RavA. The polypeptide is Regulatory protein ViaA (Escherichia coli O9:H4 (strain HS)).